The chain runs to 1274 residues: Polycomb protein Sfmbt (1274 aa).

Residues 266 to 285 (PSSKQMKGYRNSNSSGTSSA) are disordered. A compositionally biased stretch (polar residues) spans 267–278 (SSKQMKGYRNSN). Residues 331-366 (PIQKDGMAVCERCGAIGVKHTFYTKSRRFCSMACAR) form an FCS-type zinc finger. Residues Cys-340, Cys-343, Cys-360, and Cys-364 each contribute to the Zn(2+) site. The segment covering 381–394 (TGATTSNNQSTSSS) has biased composition (low complexity). Disordered stretches follow at residues 381–401 (TGATTSNNQSTSSSPLPAASG) and 488–510 (PGGEANGSGNDTSTPNTASSGYL). Polar residues predominate over residues 494-509 (GSGNDTSTPNTASSGY). MBT repeat units follow at residues 564–675 (YDWL…LIPP), 683–781 (KDWK…LAAP), 789–899 (LAGR…VTPP), and 907–1003 (FTWE…LEGP). Disordered stretches follow at residues 1007–1063 (SYQQ…TTPH) and 1083–1167 (YENN…NSSA). Residues 1019–1028 (KVPRKKKTKK) are compositionally biased toward basic residues. Positions 1038–1050 (AKQQNDNTQTTQT) are enriched in low complexity. Residues 1087-1114 (QPEDGDGDEEDPDPDADADLDADADGDG) are compositionally biased toward acidic residues. 2 stretches are compositionally biased toward polar residues: residues 1117–1128 (STSHISEQSTTH) and 1158–1167 (GNSNKMNSSA). Positions 1194–1258 (WNVYDVSQFL…DLITQLKCKV (65 aa)) constitute an SAM domain.

As to quaternary structure, interacts with pho as a component of the pho-repressive complex (PhoRC).

The protein localises to the nucleus. Polycomb group (PcG) protein that binds to the Polycomb response elements (PREs) found in the regulatory regions of many genes. PcG proteins act by forming multiprotein complexes, which are required to maintain the transcriptionally repressive state of homeotic genes throughout development. PcG proteins are not required to initiate repression, but to maintain it during later stages of development. They probably act via the methylation of histones, rendering chromatin heritably changed in its expressibility. Necessary but not sufficient to recruit a functional PcG repressive complex that represses target genes, suggesting that the recruitment of the distinct PRC1 complex is also required to allow a subsequent repression. This is Polycomb protein Sfmbt from Drosophila pseudoobscura pseudoobscura (Fruit fly).